The chain runs to 595 residues: Putative laccase-18 (595 aa).

An N-terminal signal peptide occupies residues 1 to 29 (MEKLSTAASLFGVVVAATALAMAVVGGEA). 2 consecutive Plastocyanin-like domains span residues 37-153 (MVHE…PRDG) and 162-316 (KDVP…YTGA). Residues Asn-42 and Asn-48 are each glycosylated (N-linked (GlcNAc...) asparagine). Cu cation-binding residues include His-87 and His-89. An N-linked (GlcNAc...) asparagine glycan is attached at Asn-121. Residues His-132 and His-134 each contribute to the Cu cation site. 7 N-linked (GlcNAc...) asparagine glycosylation sites follow: Asn-206, Asn-345, Asn-382, Asn-402, Asn-409, Asn-439, and Asn-470. The region spanning 429-571 (DFPVRPPRPF…ATAFIVEDGP (143 aa)) is the Plastocyanin-like 3 domain. Cu cation contacts are provided by Asn-488, His-491, His-493, His-550, Cys-551, His-552, His-556, and Met-561. Residues 570-595 (GPTPETSLPPPPPEFKRCGTNGLSQP) are disordered.

Belongs to the multicopper oxidase family. It depends on Cu cation as a cofactor.

It localises to the secreted. The protein resides in the extracellular space. Its subcellular location is the apoplast. The catalysed reaction is 4 hydroquinone + O2 = 4 benzosemiquinone + 2 H2O. Functionally, lignin degradation and detoxification of lignin-derived products. The sequence is that of Putative laccase-18 (LAC18) from Oryza sativa subsp. indica (Rice).